The chain runs to 310 residues: GMP synthase [glutamine-hydrolyzing] subunit B (310 aa).

One can recognise a GMPS ATP-PPase domain in the interval 2–185 (FDAKSFIEES…LGLPEKIAHR (184 aa)). Position 29-35 (29-35 (SGGVDSS)) interacts with ATP.

In terms of assembly, heterodimer composed of a glutamine amidotransferase subunit (A) and a GMP-binding subunit (B).

The catalysed reaction is XMP + L-glutamine + ATP + H2O = GMP + L-glutamate + AMP + diphosphate + 2 H(+). Its pathway is purine metabolism; GMP biosynthesis; GMP from XMP (L-Gln route): step 1/1. Catalyzes the synthesis of GMP from XMP. The polypeptide is GMP synthase [glutamine-hydrolyzing] subunit B (Methanococcus vannielii (strain ATCC 35089 / DSM 1224 / JCM 13029 / OCM 148 / SB)).